Consider the following 758-residue polypeptide: 5-methyltetrahydropteroyltriglutamate--homocysteine methyltransferase (758 aa).

5-methyltetrahydropteroyltri-L-glutamate-binding positions include 17 to 20 (RELK) and K117. Residues 434–436 (IGS) and E487 contribute to the L-homocysteine site. L-methionine is bound by residues 434–436 (IGS) and E487. Residues 518 to 519 (RC) and W564 contribute to the 5-methyltetrahydropteroyltri-L-glutamate site. D602 contacts L-homocysteine. D602 contributes to the L-methionine binding site. E608 is a binding site for 5-methyltetrahydropteroyltri-L-glutamate. Residues H644, C646, and E668 each contribute to the Zn(2+) site. Residue H697 is the Proton donor of the active site. Residue C729 participates in Zn(2+) binding.

It belongs to the vitamin-B12 independent methionine synthase family. Requires Zn(2+) as cofactor.

The catalysed reaction is 5-methyltetrahydropteroyltri-L-glutamate + L-homocysteine = tetrahydropteroyltri-L-glutamate + L-methionine. The protein operates within amino-acid biosynthesis; L-methionine biosynthesis via de novo pathway; L-methionine from L-homocysteine (MetE route): step 1/1. Functionally, catalyzes the transfer of a methyl group from 5-methyltetrahydrofolate to homocysteine resulting in methionine formation. The chain is 5-methyltetrahydropteroyltriglutamate--homocysteine methyltransferase from Sodalis glossinidius (strain morsitans).